We begin with the raw amino-acid sequence, 384 residues long: Putative dioxygenase SSO1533 (384 aa).

Residues histidine 296, glutamate 302, and histidine 332 each contribute to the Fe cation site.

It belongs to the homogentisate dioxygenase family. Fe cation is required as a cofactor.

The sequence is that of Putative dioxygenase SSO1533 from Saccharolobus solfataricus (strain ATCC 35092 / DSM 1617 / JCM 11322 / P2) (Sulfolobus solfataricus).